The primary structure comprises 55 residues: Large ribosomal subunit protein bL32c (55 aa).

The disordered stretch occupies residues Met-1 to Gly-24.

The protein belongs to the bacterial ribosomal protein bL32 family.

It is found in the plastid. The protein localises to the chloroplast. The sequence is that of Large ribosomal subunit protein bL32c from Phaeodactylum tricornutum (strain CCAP 1055/1).